The chain runs to 104 residues: Integration host factor subunit alpha (104 aa).

This sequence belongs to the bacterial histone-like protein family. As to quaternary structure, heterodimer of an alpha and a beta chain.

Its function is as follows. This protein is one of the two subunits of integration host factor, a specific DNA-binding protein that functions in genetic recombination as well as in transcriptional and translational control. The protein is Integration host factor subunit alpha of Methylobacterium sp. (strain 4-46).